The sequence spans 193 residues: Holliday junction branch migration complex subunit RuvA (193 aa).

The interval M1 to M64 is domain I. Positions T65–P139 are domain II. Residues P139–G143 are flexible linker. Positions G144–H193 are domain III.

The protein belongs to the RuvA family. As to quaternary structure, homotetramer. Forms an RuvA(8)-RuvB(12)-Holliday junction (HJ) complex. HJ DNA is sandwiched between 2 RuvA tetramers; dsDNA enters through RuvA and exits via RuvB. An RuvB hexamer assembles on each DNA strand where it exits the tetramer. Each RuvB hexamer is contacted by two RuvA subunits (via domain III) on 2 adjacent RuvB subunits; this complex drives branch migration. In the full resolvosome a probable DNA-RuvA(4)-RuvB(12)-RuvC(2) complex forms which resolves the HJ.

The protein resides in the cytoplasm. In terms of biological role, the RuvA-RuvB-RuvC complex processes Holliday junction (HJ) DNA during genetic recombination and DNA repair, while the RuvA-RuvB complex plays an important role in the rescue of blocked DNA replication forks via replication fork reversal (RFR). RuvA specifically binds to HJ cruciform DNA, conferring on it an open structure. The RuvB hexamer acts as an ATP-dependent pump, pulling dsDNA into and through the RuvAB complex. HJ branch migration allows RuvC to scan DNA until it finds its consensus sequence, where it cleaves and resolves the cruciform DNA. The protein is Holliday junction branch migration complex subunit RuvA of Acidithiobacillus ferrooxidans (strain ATCC 53993 / BNL-5-31) (Leptospirillum ferrooxidans (ATCC 53993)).